The sequence spans 151 residues: Deoxyuridine 5'-triphosphate nucleotidohydrolase (151 aa).

Substrate contacts are provided by residues 69–71 (RSG), N82, 86–88 (LID), and M96.

The protein belongs to the dUTPase family. It depends on Mg(2+) as a cofactor.

It catalyses the reaction dUTP + H2O = dUMP + diphosphate + H(+). It participates in pyrimidine metabolism; dUMP biosynthesis; dUMP from dCTP (dUTP route): step 2/2. This enzyme is involved in nucleotide metabolism: it produces dUMP, the immediate precursor of thymidine nucleotides and it decreases the intracellular concentration of dUTP so that uracil cannot be incorporated into DNA. This Blochmanniella floridana protein is Deoxyuridine 5'-triphosphate nucleotidohydrolase.